The following is a 145-amino-acid chain: Mite group 2 allergen Eur m 2 (145 aa).

The first 16 residues, Met-1–Ala-16, serve as a signal peptide directing secretion. 3 disulfides stabilise this stretch: Cys-24–Cys-135, Cys-37–Cys-43, and Cys-89–Cys-94.

It belongs to the NPC2 family.

The protein resides in the secreted. The chain is Mite group 2 allergen Eur m 2 (EURM2) from Euroglyphus maynei (Mayne's house dust mite).